Consider the following 154-residue polypeptide: Protein X (154 aa).

The segment at 68–117 is mitochondrial targeting sequence; it reads PCALRFTSARRMETTVNAHQVLPKVLHKRTLGLSAMSTTDLEAYFKDCLF.

It belongs to the orthohepadnavirus protein X family. As to quaternary structure, may form homodimer. May interact with host CEBPA, CFLAR, CREB1, DDB1, E4F1, HBXIP, HSPD1/HSP60, NFKBIA, POLR2E and SMAD4. Interacts with host SMC5-SMC6 complex and induces its degradation. Interacts with host TRPC4AP; leading to prevent ubiquitination of TRPC4AP. Interacts with host PLSCR1; this interaction promotes ubiquitination and degradation of HBx and impairs HBx-mediated cell proliferation. Post-translationally, a fraction may be phosphorylated in insect cells and HepG2 cells, a human hepatoblastoma cell line. Phosphorylated in vitro by host protein kinase C or mitogen-activated protein kinase. N-acetylated in insect cells.

The protein localises to the host cytoplasm. Its subcellular location is the host nucleus. It localises to the host mitochondrion. Functionally, multifunctional protein that plays a role in silencing host antiviral defenses and promoting viral transcription. Does not seem to be essential for HBV infection. May be directly involved in development of cirrhosis and liver cancer (hepatocellular carcinoma). Most of cytosolic activities involve modulation of cytosolic calcium. The effect on apoptosis is controversial depending on the cell types in which the studies have been conducted. May induce apoptosis by localizing in mitochondria and causing loss of mitochondrial membrane potential. May also modulate apoptosis by binding host CFLAR, a key regulator of the death-inducing signaling complex (DISC). Promotes viral transcription by using the host E3 ubiquitin ligase DDB1 to target the SMC5-SMC6 complex to proteasomal degradation. This host complex would otherwise bind to viral episomal DNA, and prevents its transcription. Moderately stimulates transcription of many different viral and cellular transcription elements. Promoters and enhancers stimulated by HBx contain DNA binding sites for NF-kappa-B, AP-1, AP-2, c-EBP, ATF/CREB, or the calcium-activated factor NF-AT. This Hepatitis B virus genotype C subtype adr (isolate Japan/Nishioka/1983) (HBV-C) protein is Protein X.